A 152-amino-acid polypeptide reads, in one-letter code: Ribosome maturation factor RimP (152 aa).

It belongs to the RimP family.

The protein resides in the cytoplasm. In terms of biological role, required for maturation of 30S ribosomal subunits. This Burkholderia vietnamiensis (strain G4 / LMG 22486) (Burkholderia cepacia (strain R1808)) protein is Ribosome maturation factor RimP.